A 75-amino-acid polypeptide reads, in one-letter code: Translational regulator CsrA (75 aa).

It belongs to the CsrA/RsmA family. Homodimer; the beta-strands of each monomer intercalate to form a hydrophobic core, while the alpha-helices form wings that extend away from the core.

The protein localises to the cytoplasm. A translational regulator that binds mRNA to regulate translation initiation and/or mRNA stability. Usually binds in the 5'-UTR at or near the Shine-Dalgarno sequence preventing ribosome-binding, thus repressing translation. Its main target seems to be the major flagellin gene, while its function is anatagonized by FliW. The chain is Translational regulator CsrA from Exiguobacterium sp. (strain ATCC BAA-1283 / AT1b).